A 106-amino-acid chain; its full sequence is MRGNIAQLMQQAQKMQENLQRAQEELAKLEVTGTAGGGMVSVTLTGAKECRKVRIDPSILSDQEMAEDLIAAAFNDASNKIDAESKDRMGSATAGMQLPPGMKLPF.

Over residues 80 to 89 (KIDAESKDRM) the composition is skewed to basic and acidic residues. Residues 80–106 (KIDAESKDRMGSATAGMQLPPGMKLPF) form a disordered region.

It belongs to the YbaB/EbfC family. In terms of assembly, homodimer.

It is found in the cytoplasm. The protein localises to the nucleoid. Its function is as follows. Binds to DNA and alters its conformation. May be involved in regulation of gene expression, nucleoid organization and DNA protection. The protein is Nucleoid-associated protein XAC1110 of Xanthomonas axonopodis pv. citri (strain 306).